A 222-amino-acid chain; its full sequence is Ras-related protein Rab-21 (222 aa).

Ala-2 carries the N-acetylalanine modification. The GTP site is built by Gly-26, Gly-29, Lys-30, Thr-31, Ser-32, Asn-43, Asp-44, His-46, Thr-48, and Thr-49. Thr-31 is a binding site for Mg(2+). The Switch 1 motif lies at 41 to 54 (KFNDKHITTLQASF). Mg(2+)-binding residues include Thr-49 and Asp-72. Positions 74–92 (AGQERFHALGPIYYRDSNG) match the Switch 2 motif. Gly-75, Asn-130, Lys-131, Asp-133, Ala-161, and Lys-162 together coordinate GTP. S-geranylgeranyl cysteine attachment occurs at residues Cys-218 and Cys-219. Cys-219 is modified (cysteine methyl ester). A propeptide spans 220-222 (SSG) (removed in mature form).

The protein belongs to the small GTPase superfamily. Rab family. Interacts with the cytoplasmic tail of integrins ITGA1, ITGA2, ITGA5, ITGA6, ITGA11 and ITGB1; this interaction is dependent upon its GDP/GTP cycle. Interacts with RABGEF1 (via VPS9 domain). Interacts with ANKRD27. Interacts with VAMP7. Interacts (in GTP-bound form) with VAMP8 in response to starvation; the interaction probably regulates VAMP8 endolysosomal trafficking. Interacts (active GTP-bound form) with TMED10; the interaction is indirect and regulates TMED10 abundance and localization at the Golgi. Mg(2+) serves as cofactor.

The protein localises to the endoplasmic reticulum membrane. Its subcellular location is the golgi apparatus. The protein resides in the trans-Golgi network. It localises to the golgi apparatus membrane. It is found in the early endosome membrane. The protein localises to the cytoplasmic vesicle membrane. Its subcellular location is the cleavage furrow. The protein resides in the cell projection. It localises to the neuron projection. The enzyme catalyses GTP + H2O = GDP + phosphate + H(+). With respect to regulation, regulated by guanine nucleotide exchange factors (GEFs) including ANKRD27 and RABGEF1, which promote the exchange of bound GDP for free GTP. Regulated by GTPase activating proteins (GAPs) which increase the GTP hydrolysis activity. Inhibited by GDP dissociation inhibitors (GDIs). Functionally, the small GTPases Rab are key regulators of intracellular membrane trafficking, from the formation of transport vesicles to their fusion with membranes. Rabs cycle between an inactive GDP-bound form and an active GTP-bound form that is able to recruit to membranes different sets of downstream effectors directly responsible for vesicle formation, movement, tethering and fusion. RAB21 is involved in membrane trafficking control. Regulates integrin internalization and recycling, but does not influence the traffic of endosomally translocated receptors in general. As a result, may regulate cell adhesion and migration. During the mitosis of adherent cells, controls the endosomal trafficking of integrins which is required for the successful completion of cytokinesis. Involved in neurite growth. Following SBF2/MTMT13-mediated activation in response to starvation-induced autophagy, binds to and regulates SNARE protein VAMP8 endolysosomal transport required for SNARE-mediated autophagosome-lysosome fusion. Modulates protein levels of the cargo receptors TMED2 and TMED10, and required for appropriate Golgi localization of TMED10. The chain is Ras-related protein Rab-21 from Mus musculus (Mouse).